The chain runs to 420 residues: F420-non-reducing hydrogenase vhu subunit A (420 aa).

Residues C61 and C64 each coordinate Ni(2+).

It belongs to the [NiFe]/[NiFeSe] hydrogenase large subunit family. As to quaternary structure, the F420-non-reducing hydrogenase vhu is composed of four subunits; VhuA, VhuD, VhuG and VhuU. The cofactor is Ni(2+).

The protein is F420-non-reducing hydrogenase vhu subunit A (vhuA) of Methanococcus voltae.